Here is a 345-residue protein sequence, read N- to C-terminus: Thylakoid lumenal 29 kDa protein, chloroplastic (345 aa).

It belongs to the peroxidase family.

The protein resides in the plastid. The protein localises to the chloroplast thylakoid lumen. The polypeptide is Thylakoid lumenal 29 kDa protein, chloroplastic (CLEB3J9) (Solanum lycopersicum (Tomato)).